The sequence spans 262 residues: MAVGKNKRISKGRKGGKKKIVDPFAKKDWYDIKAPSSFTHRNVGKTLVSRTQGTKIASEGLKHRVFEVSLADLNKDEDQAYRKIRLRAEDVQGRNVLTQFWGMDFTTDKLRSLVKKWQTLIESHVDVKTTDNYTLRLFCIAFTKRRANQVKRTCYAQSSQIRQIRSKMREIMIKEEASSCDLKELVAKFIPESIGKDIEKATQGIYPLQNVFIRKVKILKAPKFDLRKLMEVHGDYTAEDVGVKVDRPADEVVEEPTEIIGA.

The protein belongs to the eukaryotic ribosomal protein eS1 family. In terms of assembly, component of the small ribosomal subunit. Mature ribosomes consist of a small (40S) and a large (60S) subunit. The 40S subunit contains about 33 different proteins and 1 molecule of RNA (18S). The 60S subunit contains about 49 different proteins and 3 molecules of RNA (25S, 5.8S and 5S).

It localises to the cytoplasm. The sequence is that of Small ribosomal subunit protein eS1 from Brassica campestris (Field mustard).